A 676-amino-acid polypeptide reads, in one-letter code: Long-chain-fatty-acid--CoA ligase 1 (676 aa).

Residue 246 to 257 (YTSGSTGLPKGV) coordinates ATP. The short motif at 511–560 (DGWFRTGDVGELTPEGLLRIIDRKKNLVKTQNGEYIALEKLESRYRTSSL) is the FACS element.

It belongs to the ATP-dependent AMP-binding enzyme family. Mg(2+) is required as a cofactor.

It catalyses the reaction a long-chain fatty acid + ATP + CoA = a long-chain fatty acyl-CoA + AMP + diphosphate. Esterification, concomitant with transport, of exogenous long-chain fatty acids into metabolically active CoA thioesters for subsequent degradation or incorporation into phospholipids. It may supplement intracellular myristoyl-CoA pools from exogenous myristate. Preferentially acts on C12:0-C16:0 fatty acids with myristic and pentadecanic acid (C15:0) having the highest activities. Appears to play a role in the maintenance of cell viability during stationary phase. This is Long-chain-fatty-acid--CoA ligase 1 (lcf1) from Schizosaccharomyces pombe (strain 972 / ATCC 24843) (Fission yeast).